A 284-amino-acid chain; its full sequence is Nucleotide-binding protein Shewmr4_0670 (284 aa).

8-15 contacts ATP; it reads GRSGSGKS. 56–59 lines the GTP pocket; that stretch reads DVRN.

This sequence belongs to the RapZ-like family.

Its function is as follows. Displays ATPase and GTPase activities. The protein is Nucleotide-binding protein Shewmr4_0670 of Shewanella sp. (strain MR-4).